Here is a 420-residue protein sequence, read N- to C-terminus: DNA primase small subunit (420 aa).

At M1 the chain carries N-acetylmethionine. Active-site residues include E44, D109, and D111. Positions 109 and 111 each coordinate Mg(2+). Positions 109 and 111 each coordinate Mn(2+). 109–111 (DID) lines the a ribonucleoside 5'-triphosphate pocket. Zn(2+)-binding residues include C121, C122, C128, and C131. The Zinc knuckle motif signature appears at 121–131 (CCSSADICPKC). 160–166 (SGRRGVH) is an a ribonucleoside 5'-triphosphate binding site. Residue D306 coordinates Mg(2+). D306 is a binding site for Mn(2+). A ribonucleoside 5'-triphosphate contacts are provided by residues 315-318 (HLLK) and H324. Residues 363–373 (NEEEKEENEAE) show a composition bias toward acidic residues. Positions 363-382 (NEEEKEENEAESDVKHRTRD) are disordered.

The protein belongs to the eukaryotic-type primase small subunit family. In terms of assembly, heterodimer of a catalytic subunit PRIM1 and a regulatory subunit PRIM2, also known as the DNA primase complex. Interacts with PRIM2 (via C-terminus). Component of the alpha DNA polymerase complex (also known as the alpha DNA polymerase-primase complex) consisting of four subunits: the catalytic subunit POLA1, the regulatory subunit POLA2, and the primase complex subunits PRIM1 and PRIM2 respectively. Within the complex, POLA1 directly interacts with PRIM2. Mg(2+) is required as a cofactor. The cofactor is Mn(2+).

The catalysed reaction is ssDNA + n NTP = ssDNA/pppN(pN)n-1 hybrid + (n-1) diphosphate.. With respect to regulation, the presence of the regulatory subunit PRIM2/p58 accelerates the kinetics of initiation and primer extension. Inhibited by arabinose nucleoside derivatives such as fludarabine and vidarabine. In terms of biological role, catalytic subunit of the DNA primase complex and component of the DNA polymerase alpha complex (also known as the alpha DNA polymerase-primase complex - primosome/replisome) which play an essential role in the initiation of DNA synthesis. During the S phase of the cell cycle, the DNA polymerase alpha complex (composed of a catalytic subunit POLA1, an accessory subunit POLA2 and two primase subunits, the catalytic subunit PRIM1 and the regulatory subunit PRIM2) is recruited to DNA at the replicative forks via direct interactions with MCM10 and WDHD1. The primase subunit of the polymerase alpha complex initiates DNA synthesis by oligomerising short RNA primers on both leading and lagging strands. These primers are initially extended by the polymerase alpha catalytic subunit and subsequently transferred to polymerase delta and polymerase epsilon for processive synthesis on the lagging and leading strand, respectively. In the primase complex, both subunits are necessary for the initial di-nucleotide formation, but the extension of the primer depends only on the catalytic subunit. Synthesizes 9-mer RNA primers (also known as the 'unit length' RNA primers). Incorporates only ribonucleotides in the presence of ribo- and deoxy-nucleotide triphosphates (rNTPs, dNTPs). Requires template thymine or cytidine to start the RNA primer synthesis, with an adenine or guanine at its 5'-end. Binds single stranded DNA. The protein is DNA primase small subunit (PRIM1) of Homo sapiens (Human).